Reading from the N-terminus, the 986-residue chain is Bifunctional glutamine synthetase adenylyltransferase/adenylyl-removing enzyme (986 aa).

Residues Met1–Thr470 form an adenylyl removase region. An adenylyl transferase region spans residues Ala476–Pro986.

This sequence belongs to the GlnE family. Mg(2+) serves as cofactor.

The enzyme catalyses [glutamine synthetase]-O(4)-(5'-adenylyl)-L-tyrosine + phosphate = [glutamine synthetase]-L-tyrosine + ADP. It catalyses the reaction [glutamine synthetase]-L-tyrosine + ATP = [glutamine synthetase]-O(4)-(5'-adenylyl)-L-tyrosine + diphosphate. Involved in the regulation of glutamine synthetase GlnA, a key enzyme in the process to assimilate ammonia. When cellular nitrogen levels are high, the C-terminal adenylyl transferase (AT) inactivates GlnA by covalent transfer of an adenylyl group from ATP to specific tyrosine residue of GlnA, thus reducing its activity. Conversely, when nitrogen levels are low, the N-terminal adenylyl removase (AR) activates GlnA by removing the adenylyl group by phosphorolysis, increasing its activity. The regulatory region of GlnE binds the signal transduction protein PII (GlnB) which indicates the nitrogen status of the cell. The polypeptide is Bifunctional glutamine synthetase adenylyltransferase/adenylyl-removing enzyme (Mesorhizobium japonicum (strain LMG 29417 / CECT 9101 / MAFF 303099) (Mesorhizobium loti (strain MAFF 303099))).